Consider the following 340-residue polypeptide: C5a anaphylatoxin chemotactic receptor 1 (340 aa).

The Extracellular portion of the chain corresponds to 1 to 30; sequence TPDYGHYDDKDTLDANTPVDKTSNTLRVPD. The interval 3–11 is required for CHIPS binding; the sequence is DYGHYDDKD. Sulfotyrosine is present on residues Tyr-4 and Tyr-7. An involved in C5a binding region spans residues 14–23; that stretch reads DANTPVDKTS. Residues 31 to 57 form a helical membrane-spanning segment; sequence ILALVIFAVVFLVGVLRNALVVWVTAF. Over 58–62 the chain is Cytoplasmic; that stretch reads EAKRT. A helical transmembrane segment spans residues 63 to 86; the sequence is INAIWFLNLAVADFLSCLALPILF. Residues 87 to 103 lie on the Extracellular side of the membrane; that stretch reads TSIVQHHHWPFGGAACR. Cys-102 and Cys-181 form a disulfide bridge. Residues 104-125 traverse the membrane as a helical segment; sequence ILPSLILLNMYASILLLATISA. The Cytoplasmic segment spans residues 126-146; the sequence is DRFLLVFNPIWCQNFRGAGLA. Residues 147 to 167 form a helical membrane-spanning segment; that stretch reads WIACAVAWGLALLLTIPSFLY. At 168–193 the chain is on the extracellular side; sequence RVVREEYFPPKVLCGVDHGHDKRRER. Residues 194-219 traverse the membrane as a helical segment; sequence AVAIARLVLGFVWPLLTLTMCYTFLL. Residues 220–235 are Cytoplasmic-facing; that stretch reads LRTWSRRATRSTKTLK. The chain crosses the membrane as a helical span at residues 236-258; it reads VVVAVVASFFIFWLPYQVTGMMM. At 259–275 the chain is on the extracellular side; it reads SFLEPSSPTFLLLKKLD. A helical membrane pass occupies residues 276-296; it reads SLCISFAYINCCINPIIYVVA. Over 297-340 the chain is Cytoplasmic; it reads GQGFQGRLRKSLPSLLRNVLTEESMVRESKSFTRSTVDTMAQKT. Ser-307, Ser-310, Ser-320, Ser-325, Ser-327, and Ser-331 each carry phosphoserine.

This sequence belongs to the G-protein coupled receptor 1 family. As to quaternary structure, homodimer. May also form higher-order oligomers. Interacts (when phosphorylated) with ARRB1 and ARRB2; the interaction is associated with internalization of C5aR. Interacts (via N-terminal domain) with S.aureus chemotaxis inhibitory protein (CHIPS); the interaction blocks the receptor and may thus inhibit the immune response. Sulfation plays a critical role in the association of C5aR with C5a, but no significant role in the ability of the receptor to transduce a signal and mobilize calcium in response to a small peptide agonist. Sulfation at Tyr-7 is important for CHIPS binding. Post-translationally, phosphorylated on serine residues in response to C5a binding, resulting in internalization of the receptor and short-term desensitization to C5a.

The protein resides in the cell membrane. It is found in the cytoplasmic vesicle. Its function is as follows. Receptor for the chemotactic and inflammatory peptide anaphylatoxin C5a. The ligand interacts with at least two sites on the receptor: a high-affinity site on the extracellular N-terminus, and a second site in the transmembrane region which activates downstream signaling events. Receptor activation stimulates chemotaxis, granule enzyme release, intracellular calcium release and superoxide anion production. This Macaca mulatta (Rhesus macaque) protein is C5a anaphylatoxin chemotactic receptor 1 (C5AR1).